Here is a 689-residue protein sequence, read N- to C-terminus: uncharacterized protein (689 aa).

Composition is skewed to low complexity over residues 347–359 and 370–388; these read RPPS…AGEP and ASTA…TRPT. The tract at residues 347–689 is disordered; the sequence is RPPSGSGEAA…KSQPPAAHTA (343 aa). A compositionally biased stretch (basic and acidic residues) spans 405–480; sequence ARPESEEQTD…QESQVARRDE (76 aa). Pro residues-rich tracts occupy residues 515–539 and 550–569; these read VPGP…PPMT and RCPP…PPRP. Composition is skewed to low complexity over residues 570-581 and 591-610; these read SSDTPLSAVSRP and TARV…YSPA. The segment covering 611–620 has biased composition (pro residues); sequence PLSPPSPVSP. Low complexity predominate over residues 666–676; the sequence is SVPSSASPSAS.

This is an uncharacterized protein from Homo sapiens (Human).